The chain runs to 203 residues: Ribosomal RNA small subunit methyltransferase G (203 aa).

S-adenosyl-L-methionine contacts are provided by residues Gly75, Leu80, 126-127, and Arg141; that span reads VE.

Belongs to the methyltransferase superfamily. RNA methyltransferase RsmG family.

The protein resides in the cytoplasm. The enzyme catalyses guanosine(527) in 16S rRNA + S-adenosyl-L-methionine = N(7)-methylguanosine(527) in 16S rRNA + S-adenosyl-L-homocysteine. In terms of biological role, specifically methylates the N7 position of guanine in position 527 of 16S rRNA. This is Ribosomal RNA small subunit methyltransferase G from Ruthia magnifica subsp. Calyptogena magnifica.